The sequence spans 223 residues: Probable cytokinin riboside 5'-monophosphate phosphoribohydrolase LOGL1 (223 aa).

Residues Glu-89, 107–108 (RK), 124–130 (GYGTMEE), and Thr-136 each bind substrate. The interval 201–223 (QEVAPRTSWEMSELGYGKTPEES) is disordered.

This sequence belongs to the LOG family. As to expression, expressed in shoot apex, immature inflorescences and flowers.

The enzyme catalyses N(6)-(dimethylallyl)adenosine 5'-phosphate + H2O = N(6)-dimethylallyladenine + D-ribose 5-phosphate. It catalyses the reaction 9-ribosyl-trans-zeatin 5'-phosphate + H2O = trans-zeatin + D-ribose 5-phosphate. Cytokinin-activating enzyme working in the direct activation pathway. Phosphoribohydrolase that converts inactive cytokinin nucleotides to the biologically active free-base forms. In Oryza sativa subsp. japonica (Rice), this protein is Probable cytokinin riboside 5'-monophosphate phosphoribohydrolase LOGL1 (LOGL1).